The primary structure comprises 248 residues: Ribosomal RNA small subunit methyltransferase J (248 aa).

Residues 98–99, 114–115, 150–151, and aspartate 168 each bind S-adenosyl-L-methionine; these read RD, ER, and SS.

It belongs to the methyltransferase superfamily. RsmJ family.

The protein localises to the cytoplasm. The enzyme catalyses guanosine(1516) in 16S rRNA + S-adenosyl-L-methionine = N(2)-methylguanosine(1516) in 16S rRNA + S-adenosyl-L-homocysteine + H(+). Functionally, specifically methylates the guanosine in position 1516 of 16S rRNA. The protein is Ribosomal RNA small subunit methyltransferase J of Shewanella baltica (strain OS195).